The chain runs to 147 residues: Hemoglobin subunit epsilon (147 aa).

The 145-residue stretch at 3–147 (HFTAEEKAAV…VAIALAHKYH (145 aa)) folds into the Globin domain. Phosphoserine is present on residues serine 14 and serine 51. Positions 64 and 93 each coordinate heme b.

The protein belongs to the globin family. Heterotetramer of two alpha chains and two epsilon chains in early embryonic hemoglobin Gower-2; two zeta chains and two epsilon chains in early embryonic hemoglobin Gower-1. Red blood cells.

The epsilon chain is a beta-type chain of early mammalian embryonic hemoglobin. This is Hemoglobin subunit epsilon (HBE1) from Symphalangus syndactylus (Siamang).